A 294-amino-acid chain; its full sequence is uncharacterized protein (294 aa).

Belongs to the glycosyltransferase 2 family. WaaE/KdtX subfamily.

This is an uncharacterized protein from Rickettsia bellii (strain RML369-C).